A 97-amino-acid chain; its full sequence is DNA-directed RNA polymerase subunit omega (97 aa).

Residues 1 to 16 are compositionally biased toward polar residues; that stretch reads MSTPNALAAFNSSPSL. Residues 1-21 form a disordered region; that stretch reads MSTPNALAAFNSSPSLNAPEG.

It belongs to the RNA polymerase subunit omega family. The RNAP catalytic core consists of 2 alpha, 1 beta, 1 beta' and 1 omega subunit. When a sigma factor is associated with the core the holoenzyme is formed, which can initiate transcription.

The catalysed reaction is RNA(n) + a ribonucleoside 5'-triphosphate = RNA(n+1) + diphosphate. Promotes RNA polymerase assembly. Latches the N- and C-terminal regions of the beta' subunit thereby facilitating its interaction with the beta and alpha subunits. The chain is DNA-directed RNA polymerase subunit omega from Saccharopolyspora erythraea (strain ATCC 11635 / DSM 40517 / JCM 4748 / NBRC 13426 / NCIMB 8594 / NRRL 2338).